The primary structure comprises 165 residues: Large ribosomal subunit protein uL10 (165 aa).

Belongs to the universal ribosomal protein uL10 family. As to quaternary structure, part of the ribosomal stalk of the 50S ribosomal subunit. The N-terminus interacts with L11 and the large rRNA to form the base of the stalk. The C-terminus forms an elongated spine to which L12 dimers bind in a sequential fashion forming a multimeric L10(L12)X complex.

In terms of biological role, forms part of the ribosomal stalk, playing a central role in the interaction of the ribosome with GTP-bound translation factors. The chain is Large ribosomal subunit protein uL10 from Yersinia pseudotuberculosis serotype IB (strain PB1/+).